Here is a 46-residue protein sequence, read N- to C-terminus: Photosystem II reaction center protein K (46 aa).

Residues 1–9 (MIDALVLVA) constitute a propeptide that is removed on maturation. Over 10-19 (KLPEAYAIFD) the chain is Lumenal. Residues 20–39 (PLVDVLPVIPVLFLALAFVW) traverse the membrane as a helical segment. The Cytoplasmic portion of the chain corresponds to 40–46 (QAAVGFR).

The protein belongs to the PsbK family. PSII is composed of 1 copy each of membrane proteins PsbA, PsbB, PsbC, PsbD, PsbE, PsbF, PsbH, PsbI, PsbJ, PsbK, PsbL, PsbM, PsbT, PsbX, PsbY, PsbZ, Psb30/Ycf12, peripheral proteins PsbO, CyanoQ(PsbQ), PsbU, PsbV and a large number of cofactors. It forms dimeric complexes. Part of a photosystem II (PSII) assembly intermediate complex PSII-I; crystallized from a strain deleted of psbJ, it forms monomeric PSII before addition of the oxygen evolving complex. PSII-I includes 3 assembly factors not found in mature PSII (Psb27, Psb28 and Psb34). Requires PSII binds multiple chlorophylls, carotenoids and specific lipids. as cofactor.

Its subcellular location is the cellular thylakoid membrane. Its function is as follows. One of the components of the core complex of photosystem II (PSII). PSII is a light-driven water:plastoquinone oxidoreductase that uses light energy to abstract electrons from H(2)O, generating O(2) and a proton gradient subsequently used for ATP formation. It consists of a core antenna complex that captures photons, and an electron transfer chain that converts photonic excitation into a charge separation. Required for association of PsbZ and Psb30/Ycf12 with PSII. The protein is Photosystem II reaction center protein K of Thermosynechococcus vestitus (strain NIES-2133 / IAM M-273 / BP-1).